A 471-amino-acid polypeptide reads, in one-letter code: Putative multidrug resistance protein MdtD (471 aa).

Topologically, residues 1 to 11 (MTDLPDSTRWQ) are periplasmic. Residues 12 to 32 (LWIVAFGFFMQSLDTTIVNTA) traverse the membrane as a helical segment. Residues 33–48 (LPSMAQSLGESPLHMH) lie on the Cytoplasmic side of the membrane. Residues 49-69 (MVIVSYVLTVAVMLPASGWLA) traverse the membrane as a helical segment. Residues 70-76 (DKVGVRN) are Periplasmic-facing. Residues 77 to 97 (IFFTAIVLFTLGSLFCALSGT) form a helical membrane-spanning segment. Over 98 to 101 (LNEL) the chain is Cytoplasmic. Residues 102–124 (LLARALQGVGGAMMVPVGRLTVM) traverse the membrane as a helical segment. Topologically, residues 125 to 137 (KIVPREQYMAAMT) are periplasmic. A helical transmembrane segment spans residues 138 to 158 (FVTLPGQVGPLLGPALGGLLV). Over 159–164 (EYASWH) the chain is Cytoplasmic. Residues 165-185 (WIFLINIPVGIIGAIATLMLM) form a helical membrane-spanning segment. Residues 186–196 (PNYTMQTRRFD) are Periplasmic-facing. Residues 197-217 (LSGFLLLAVGMAVLTLALDGS) traverse the membrane as a helical segment. The Cytoplasmic segment spans residues 218–224 (KGTGLSP). The chain crosses the membrane as a helical span at residues 225–245 (LTIDGLVAVGVVALVLYLLHA). Residues 246–262 (RNNNRALFSLKLFRTRT) lie on the Periplasmic side of the membrane. The chain crosses the membrane as a helical span at residues 263–283 (FSLGLAGSFAGRIGSGMLPFM). Residues 284-285 (TP) lie on the Cytoplasmic side of the membrane. A helical membrane pass occupies residues 286-306 (VFLQIGLGFSPFHAGLMMIPM). Residues 307 to 341 (VLGSMGMKRIVVQVVNRFGYRRVLVATTLGLSLVT) are Periplasmic-facing. The helical transmembrane segment at 342–362 (LLFMTTALLGWYYVLPFVLFL) threads the bilayer. At 363–395 (QGMVNSTRFSSMNTLTLKDLPDNLASSGNSLLS) the chain is on the cytoplasmic side. Residues 396–416 (MIMQLSMSIGVTIAGLLLGLF) traverse the membrane as a helical segment. Topologically, residues 417-430 (GSQHVSVDSGTTQT) are periplasmic. A helical transmembrane segment spans residues 431 to 451 (VFMYTWLSMAFIIALPAFIFA). Residues 452–471 (RVPNDTHQNVAISRRKRSAQ) lie on the Cytoplasmic side of the membrane.

It belongs to the major facilitator superfamily. TCR/Tet family.

The protein resides in the cell inner membrane. This chain is Putative multidrug resistance protein MdtD, found in Escherichia coli O8 (strain IAI1).